The primary structure comprises 326 residues: N-(2-amino-2-carboxyethyl)-L-glutamate synthase (326 aa).

Lys47 is modified (N6-(pyridoxal phosphate)lysine). Pyridoxal 5'-phosphate contacts are provided by residues Asn77, 185–189 (STTGS), and Ser272.

It belongs to the cysteine synthase/cystathionine beta-synthase family. SbnA subfamily. In terms of assembly, homodimer. Pyridoxal 5'-phosphate is required as a cofactor.

It carries out the reaction O-phospho-L-serine + L-glutamate = N-[(2S)-2-amino-2-carboxyethyl]-L-glutamate + phosphate + H(+). The protein operates within siderophore biosynthesis. Functionally, catalyzes the synthesis of N-((2S)-2-amino-2-carboxyethyl)-L-glutamate (ACEGA) from O-phospho-L-serine and L-glutamate. Involved in the biosynthesis of L-2,3-diaminopropionic acid (L-Dap), a precursor of staphyloferrin B and antibiotics. The chain is N-(2-amino-2-carboxyethyl)-L-glutamate synthase (sbnA) from Staphylococcus aureus (strain bovine RF122 / ET3-1).